A 385-amino-acid polypeptide reads, in one-letter code: MLDVHFGAGNIGRGFIGETLADNGFKITFVDVNDTLIDELNKRNGYTIELAAEGQKHIEVHDVKGINNGKDPKAVAEEIAQADMVTTAIGPKILKFIAPLIADGLKLRQANNNTTPIDIIACENMIGGSQSLKKSVYESLNEDEQAWADQNAGFPNAAVDRIVPLQKHDDPLFVSVEPFKEWVIDKSQMKNPKIQLKGVDYADDLEPYIERKLFSVNTGHATVAYTGNMKGYKTIGEAVKDDSVVDQAKHVLGETGDLLIQKWGFDPEVHHAYQKKILSRFENPYISDDIERVGRTPIRKLGFNERFIRPIRELKERGRDYSALVDTVGEMFFFNYPNDSESVKLQQLLKDEPIEQVIRETTDLKDEDLVNEIKAAYEKHLAAAK.

Position 3-14 (3-14 (DVHFGAGNIGRG)) interacts with NAD(+).

Belongs to the mannitol dehydrogenase family.

It carries out the reaction D-mannitol 1-phosphate + NAD(+) = beta-D-fructose 6-phosphate + NADH + H(+). In Lactiplantibacillus plantarum (strain ATCC BAA-793 / NCIMB 8826 / WCFS1) (Lactobacillus plantarum), this protein is Mannitol-1-phosphate 5-dehydrogenase.